We begin with the raw amino-acid sequence, 297 residues long: Ribosomal RNA small subunit methyltransferase A (297 aa).

S-adenosyl-L-methionine-binding residues include asparagine 28, leucine 30, glycine 55, glutamate 76, aspartate 101, and asparagine 126.

It belongs to the class I-like SAM-binding methyltransferase superfamily. rRNA adenine N(6)-methyltransferase family. RsmA subfamily.

Its subcellular location is the cytoplasm. The enzyme catalyses adenosine(1518)/adenosine(1519) in 16S rRNA + 4 S-adenosyl-L-methionine = N(6)-dimethyladenosine(1518)/N(6)-dimethyladenosine(1519) in 16S rRNA + 4 S-adenosyl-L-homocysteine + 4 H(+). In terms of biological role, specifically dimethylates two adjacent adenosines (A1518 and A1519) in the loop of a conserved hairpin near the 3'-end of 16S rRNA in the 30S particle. May play a critical role in biogenesis of 30S subunits. This chain is Ribosomal RNA small subunit methyltransferase A, found in Latilactobacillus sakei subsp. sakei (strain 23K) (Lactobacillus sakei subsp. sakei).